Reading from the N-terminus, the 1027-residue chain is Presequence protease, mitochondrial (1027 aa).

The N-terminal 22 residues, 1 to 22, are a transit peptide targeting the mitochondrion; that stretch reads MIRQCWAGLRLCRALYQTSYRW. A Zn(2+)-binding site is contributed by H98. E101 functions as the Proton acceptor in the catalytic mechanism. Residues H102 and E199 each contribute to the Zn(2+) site. Residues C113 and C550 are joined by a disulfide bond. Residues 803–827 form a disordered region; the sequence is RKAIRPHVVEKSSNPSPSGSEISRT. Low complexity predominate over residues 814-825; sequence SSNPSPSGSEIS.

Belongs to the peptidase M16 family. PreP subfamily. Monomer and homodimer; homodimerization is induced by binding of the substrate. Zn(2+) serves as cofactor. Post-translationally, a disulfide bond locks the enzyme in the closed conformation preventing substrate entry into the catalytic chamber.

It localises to the mitochondrion matrix. Mainly exists in a closed and catalytically competent conformation but a closed-to-open switch allows substrate entry into the catalytic chamber. Substrate binding induces closure and dimerization. A disulfide bond may lock the enzyme in a closed conformation preventing substrate entry into the catalytic chamber, participating in redox regulation of the enzyme. Inhibited by metal-chelating agents. Inhibited by nickel and zinc excess, and slightly activated by manganese. Its function is as follows. Metalloendopeptidase of the mitochondrial matrix that functions in peptide cleavage and degradation rather than in protein processing. Has an ATP-independent activity. Specifically cleaves peptides in the range of 5 to 65 residues. Shows a preference for cleavage after small polar residues and before basic residues, but without any positional preference. Degrades the transit peptides of mitochondrial proteins after their cleavage. Also degrades other unstructured peptides. This is Presequence protease, mitochondrial (pitrm1) from Xenopus laevis (African clawed frog).